A 371-amino-acid polypeptide reads, in one-letter code: Histidinol-phosphate aminotransferase (371 aa).

At K228 the chain carries N6-(pyridoxal phosphate)lysine.

This sequence belongs to the class-II pyridoxal-phosphate-dependent aminotransferase family. Histidinol-phosphate aminotransferase subfamily. Requires pyridoxal 5'-phosphate as cofactor.

It catalyses the reaction L-histidinol phosphate + 2-oxoglutarate = 3-(imidazol-4-yl)-2-oxopropyl phosphate + L-glutamate. It participates in amino-acid biosynthesis; L-histidine biosynthesis; L-histidine from 5-phospho-alpha-D-ribose 1-diphosphate: step 7/9. The polypeptide is Histidinol-phosphate aminotransferase (Methanococcus maripaludis (strain C7 / ATCC BAA-1331)).